The following is a 508-amino-acid chain: Photosystem II CP47 reaction center protein (508 aa).

Helical transmembrane passes span 21–36 (SVHI…WAGS), 101–115 (IVFS…IWHW), 140–156 (GIHL…FGAF), 203–218 (IAAG…FHLS), 237–252 (VLSS…AFVV), and 457–472 (SFAL…HGSR).

Belongs to the PsbB/PsbC family. PsbB subfamily. In terms of assembly, PSII is composed of 1 copy each of membrane proteins PsbA, PsbB, PsbC, PsbD, PsbE, PsbF, PsbH, PsbI, PsbJ, PsbK, PsbL, PsbM, PsbT, PsbX, PsbY, PsbZ, Psb30/Ycf12, at least 3 peripheral proteins of the oxygen-evolving complex and a large number of cofactors. It forms dimeric complexes. Binds multiple chlorophylls. PSII binds additional chlorophylls, carotenoids and specific lipids. serves as cofactor.

The protein localises to the plastid. Its subcellular location is the chloroplast thylakoid membrane. One of the components of the core complex of photosystem II (PSII). It binds chlorophyll and helps catalyze the primary light-induced photochemical processes of PSII. PSII is a light-driven water:plastoquinone oxidoreductase, using light energy to abstract electrons from H(2)O, generating O(2) and a proton gradient subsequently used for ATP formation. In Lepidium virginicum (Virginia pepperweed), this protein is Photosystem II CP47 reaction center protein.